We begin with the raw amino-acid sequence, 611 residues long: Pseudomonine synthase PmsE (611 aa).

In terms of domain architecture, Carrier spans 533–608; that stretch reads VSVENTRTWL…SWWALVEARQ (76 aa). S569 is subject to O-(pantetheine 4'-phosphoryl)serine.

It belongs to the ATP-dependent AMP-binding enzyme family. It depends on pantetheine 4'-phosphate as a cofactor.

The catalysed reaction is salicylate + holo-[ACP] + ATP = salicyl-[ACP] + AMP + diphosphate. Its pathway is siderophore biosynthesis; pseudomonine biosynthesis. Involved in the biosynthesis of the siderophore pseudomonine. Specifically adenylates salicylate and loads it onto its peptidyl carrier domain, via a thioester linkage to the phosphopanthetheine moiety. This Pseudomonas entomophila (strain L48) protein is Pseudomonine synthase PmsE.